We begin with the raw amino-acid sequence, 264 residues long: MTTPSPSDALLIAGKRYRSRLLTGTGKFKDLDETRLATEAAAAEIVTVAIRRVNIGQDPNAPSLLDVLPPDRYTLLPNTAGCYSAEDAVRTCRLARELLDGHNLTKLEVLGDERTLYPDVVQTLKAAEQLVADGFEVMVYTSDDPILAKRLEEIGCVAVMPLAAPIGSGLGIQNKYNLLEIIENAKVPIIVDAGVGTASDAAIAMELGCDGVLMNTAIAGARDPILMASAMRKAIEAGREAFLAGRIPRKRYASASSPVDGVIG.

The active-site Schiff-base intermediate with DXP is Lys-106. Residues Gly-167, 193–194, and 215–216 contribute to the 1-deoxy-D-xylulose 5-phosphate site; these read AG and NT.

The protein belongs to the ThiG family. In terms of assembly, homotetramer. Forms heterodimers with either ThiH or ThiS.

The protein resides in the cytoplasm. The enzyme catalyses [ThiS sulfur-carrier protein]-C-terminal-Gly-aminoethanethioate + 2-iminoacetate + 1-deoxy-D-xylulose 5-phosphate = [ThiS sulfur-carrier protein]-C-terminal Gly-Gly + 2-[(2R,5Z)-2-carboxy-4-methylthiazol-5(2H)-ylidene]ethyl phosphate + 2 H2O + H(+). It participates in cofactor biosynthesis; thiamine diphosphate biosynthesis. Its function is as follows. Catalyzes the rearrangement of 1-deoxy-D-xylulose 5-phosphate (DXP) to produce the thiazole phosphate moiety of thiamine. Sulfur is provided by the thiocarboxylate moiety of the carrier protein ThiS. In vitro, sulfur can be provided by H(2)S. This chain is Thiazole synthase, found in Xanthomonas oryzae pv. oryzae (strain MAFF 311018).